Reading from the N-terminus, the 74-residue chain is Transcription attenuation protein MtrB (74 aa).

The protein belongs to the MtrB family. Oligomer of 11 identical subunits arranged in doughnut-like structure.

In terms of biological role, required for transcription attenuation control in the Trp operon. This trans-acting factor seems to recognize a 10 bases nucleotide sequence in the Trp leader transcript causing transcription termination. Binds the leader RNA only in presence of L-tryptophan. This is Transcription attenuation protein MtrB from Geobacillus sp. (strain WCH70).